A 606-amino-acid polypeptide reads, in one-letter code: WD repeat-containing protein 1 (606 aa).

13 WD repeats span residues 4-45 (EIKK…LRNI), 48-87 (PAIADIYTEHAHQVVVAKYAPSGFYIASGDVSGKLRIWDT), 93-135 (LLKY…LWDS), 138-176 (SVGEITGHNKVINSVDIKQSRPYRLVTGSDDNCAAFFEG), 180-218 (KFKFTISDHGRFVNCVRFSPDGNRFATASADGQIFIYDG), 224-263 (VCALGGSKAHDGGIYAISWSPDSTHLLSASGDKTSKIWDV), 270-306 (NTFTMGSNVLDQQLGCLWQKDHLLSISLSGYINYLDK), 311-351 (KPLR…YWDS), 358-408 (SFAG…KLDV), 432-474 (LKDQ…LYSI), 480-518 (KDEGKLLEAKGPVTDLAFSHDGAFLAVCDASKVVTVFSV), 523-561 (SENNVFYGHHAKIVCLAWSPDNEHFASGGMDMMVYVWTL), and 566-604 (TRVKIQDAHRLHHVSSLAWLDEHTLVTTSHDASVKEWTI). An N6-acetyllysine mark is found at Lys28, Lys81, Lys95, and Lys115. Tyr238 carries the phosphotyrosine modification. N6-acetyllysine is present on Lys480.

It belongs to the WD repeat AIP1 family.

The protein localises to the cytoplasm. The protein resides in the cytoskeleton. It localises to the cell projection. Its subcellular location is the podosome. Functionally, induces disassembly of actin filaments in conjunction with ADF/cofilin family proteins. Enhances cofilin-mediated actin severing. Involved in cytokinesis. Involved in chemotactic cell migration by restricting lamellipodial membrane protrusions. Involved in myocardium sarcomere organization. Required for cardiomyocyte growth and maintenance. Involved in megakaryocyte maturation and platelet shedding. Required for the establishment of planar cell polarity (PCP) during follicular epithelium development and for cell shape changes during PCP; the function seems to implicate cooperation with CFL1 and/or DSTN/ADF. Involved in the generation/maintenance of cortical tension. Involved in assembly and maintenance of epithelial apical cell junctions and plays a role in the organization of the perijunctional actomyosin belt. This Bos taurus (Bovine) protein is WD repeat-containing protein 1 (WDR1).